Consider the following 151-residue polypeptide: 3-hydroxyacyl-[acyl-carrier-protein] dehydratase FabZ (151 aa).

H57 is a catalytic residue.

The protein belongs to the thioester dehydratase family. FabZ subfamily.

The protein localises to the cytoplasm. It carries out the reaction a (3R)-hydroxyacyl-[ACP] = a (2E)-enoyl-[ACP] + H2O. Involved in unsaturated fatty acids biosynthesis. Catalyzes the dehydration of short chain beta-hydroxyacyl-ACPs and long chain saturated and unsaturated beta-hydroxyacyl-ACPs. In Synechococcus sp. (strain CC9605), this protein is 3-hydroxyacyl-[acyl-carrier-protein] dehydratase FabZ.